We begin with the raw amino-acid sequence, 601 residues long: Glutamine--fructose-6-phosphate aminotransferase [isomerizing] (601 aa).

Cys2 functions as the Nucleophile; for GATase activity in the catalytic mechanism. Positions 2 to 218 constitute a Glutamine amidotransferase type-2 domain; it reads CGIVGYIGYD…DHEIVIVKKD (217 aa). SIS domains lie at 284-423 and 453-591; these read IIND…EHGR and IATD…VDKP. Residue Lys596 is the For Fru-6P isomerization activity of the active site.

In terms of assembly, homodimer.

It localises to the cytoplasm. The enzyme catalyses D-fructose 6-phosphate + L-glutamine = D-glucosamine 6-phosphate + L-glutamate. In terms of biological role, catalyzes the first step in hexosamine metabolism, converting fructose-6P into glucosamine-6P using glutamine as a nitrogen source. The polypeptide is Glutamine--fructose-6-phosphate aminotransferase [isomerizing] (Staphylococcus aureus (strain Mu50 / ATCC 700699)).